The following is a 234-amino-acid chain: Cell polarity protein alp11 (234 aa).

In terms of domain architecture, Ubiquitin-like spans 4–88; the sequence is ITLFIKSSSA…IVVEDTRPPH (85 aa). Positions 174–216 constitute a CAP-Gly domain; it reads VPEINNDNLWVGVEFDEPVGKNDGTVSGKRYFNAKNKHGSFLR. At Ser213 the chain carries Phosphoserine.

Belongs to the TBCB family. Binds to monomeric alpha-tubulin. Interacts with alp21.

The protein resides in the cytoplasm. It is found in the cytoskeleton. Its function is as follows. Required for microtubule function and cell polarity. Involved in the proper folding of alpha-tubulin. The chain is Cell polarity protein alp11 (alp11) from Schizosaccharomyces pombe (strain 972 / ATCC 24843) (Fission yeast).